We begin with the raw amino-acid sequence, 637 residues long: Chaperone protein HtpG (637 aa).

The tract at residues 1-345 is a; substrate-binding; sequence MSQQETHGFQ…SNDLPLNVSR (345 aa). Residues 346–562 form a b region; the sequence is EILQDNHITK…EGEMSTQMIK (217 aa). The segment at 563-637 is c; it reads LMQAAGQPVP…MNQMLLANMK (75 aa).

The protein belongs to the heat shock protein 90 family. Homodimer.

Its subcellular location is the cytoplasm. Its function is as follows. Molecular chaperone. Has ATPase activity. The sequence is that of Chaperone protein HtpG from Shewanella putrefaciens (strain CN-32 / ATCC BAA-453).